Consider the following 203-residue polypeptide: Dephospho-CoA kinase (203 aa).

One can recognise a DPCK domain in the interval 6–203 (RLGITGGIAC…SLLGRGGKGG (198 aa)). Residue 14–19 (ACGKSV) participates in ATP binding.

This sequence belongs to the CoaE family.

It localises to the cytoplasm. The catalysed reaction is 3'-dephospho-CoA + ATP = ADP + CoA + H(+). It participates in cofactor biosynthesis; coenzyme A biosynthesis; CoA from (R)-pantothenate: step 5/5. Its function is as follows. Catalyzes the phosphorylation of the 3'-hydroxyl group of dephosphocoenzyme A to form coenzyme A. The protein is Dephospho-CoA kinase of Thermosynechococcus vestitus (strain NIES-2133 / IAM M-273 / BP-1).